We begin with the raw amino-acid sequence, 612 residues long: Isocitrate dehydrogenase kinase/phosphatase (612 aa).

ATP contacts are provided by residues 327-333 and Lys-348; that span reads APGIKGL. The active site involves Asp-383. The disordered stretch occupies residues 593 to 612; sequence AGAASNEQDAPDAGRSVRAA.

Belongs to the AceK family.

It is found in the cytoplasm. It catalyses the reaction L-seryl-[isocitrate dehydrogenase] + ATP = O-phospho-L-seryl-[isocitrate dehydrogenase] + ADP + H(+). Its function is as follows. Bifunctional enzyme which can phosphorylate or dephosphorylate isocitrate dehydrogenase (IDH) on a specific serine residue. This is a regulatory mechanism which enables bacteria to bypass the Krebs cycle via the glyoxylate shunt in response to the source of carbon. When bacteria are grown on glucose, IDH is fully active and unphosphorylated, but when grown on acetate or ethanol, the activity of IDH declines drastically concomitant with its phosphorylation. The sequence is that of Isocitrate dehydrogenase kinase/phosphatase from Paraburkholderia xenovorans (strain LB400).